Here is a 430-residue protein sequence, read N- to C-terminus: Serine hydroxymethyltransferase (430 aa).

(6S)-5,6,7,8-tetrahydrofolate is bound by residues Leu123 and 127 to 129 (GHL). Lys232 is modified (N6-(pyridoxal phosphate)lysine). A (6S)-5,6,7,8-tetrahydrofolate-binding site is contributed by Glu248.

This sequence belongs to the SHMT family. As to quaternary structure, homodimer. Pyridoxal 5'-phosphate is required as a cofactor.

Its subcellular location is the cytoplasm. It catalyses the reaction (6R)-5,10-methylene-5,6,7,8-tetrahydrofolate + glycine + H2O = (6S)-5,6,7,8-tetrahydrofolate + L-serine. It participates in one-carbon metabolism; tetrahydrofolate interconversion. It functions in the pathway amino-acid biosynthesis; glycine biosynthesis; glycine from L-serine: step 1/1. Functionally, catalyzes the reversible interconversion of serine and glycine with tetrahydrofolate (THF) serving as the one-carbon carrier. This reaction serves as the major source of one-carbon groups required for the biosynthesis of purines, thymidylate, methionine, and other important biomolecules. Also exhibits THF-independent aldolase activity toward beta-hydroxyamino acids, producing glycine and aldehydes, via a retro-aldol mechanism. The chain is Serine hydroxymethyltransferase from Anaplasma marginale (strain Florida).